Reading from the N-terminus, the 305-residue chain is Porphobilinogen deaminase (305 aa).

An S-(dipyrrolylmethanemethyl)cysteine modification is found at Cys-240.

This sequence belongs to the HMBS family. As to quaternary structure, monomer. The cofactor is dipyrromethane.

The enzyme catalyses 4 porphobilinogen + H2O = hydroxymethylbilane + 4 NH4(+). The protein operates within porphyrin-containing compound metabolism; protoporphyrin-IX biosynthesis; coproporphyrinogen-III from 5-aminolevulinate: step 2/4. Its function is as follows. Tetrapolymerization of the monopyrrole PBG into the hydroxymethylbilane pre-uroporphyrinogen in several discrete steps. This Xylella fastidiosa (strain M23) protein is Porphobilinogen deaminase.